A 371-amino-acid chain; its full sequence is Homoserine O-acetyltransferase (371 aa).

Residues 44–350 (NAILVEHAWT…SYGHDAFLLE (307 aa)) form the AB hydrolase-1 domain. The active-site Nucleophile is the Ser150. Position 217 (Arg217) interacts with substrate. Residues Asp311 and His344 contribute to the active site. Asp345 provides a ligand contact to substrate.

The protein belongs to the AB hydrolase superfamily. MetX family. Homodimer.

It is found in the cytoplasm. The enzyme catalyses L-homoserine + acetyl-CoA = O-acetyl-L-homoserine + CoA. It participates in amino-acid biosynthesis; L-methionine biosynthesis via de novo pathway; O-acetyl-L-homoserine from L-homoserine: step 1/1. Transfers an acetyl group from acetyl-CoA to L-homoserine, forming acetyl-L-homoserine. The chain is Homoserine O-acetyltransferase from Pelobacter propionicus (strain DSM 2379 / NBRC 103807 / OttBd1).